The primary structure comprises 82 residues: Cytochrome c-551 (82 aa).

Heme c-binding residues include C12, C15, H16, and M61.

In terms of processing, binds 1 heme c group covalently per subunit.

The chain is Cytochrome c-551 from Azotobacter vinelandii.